An 858-amino-acid chain; its full sequence is Conidiophore development regulator abaA (858 aa).

Positions 1–22 (MSSSLYHPRPVLSSQRYTPSPD) are disordered. A DNA-binding region (TEA) is located at residues 128–221 (QKDKGGVWRR…QVVKKFFEDL (94 aa)). Over residues 500 to 522 (VEHQRKKEKRTKGDDRKNLDRAG) the composition is skewed to basic and acidic residues. Disordered stretches follow at residues 500-535 (VEHQRKKEKRTKGDDRKNLDRAGSKRKRSEDDGDAA) and 792-858 (TGAG…AGGW). A Nuclear localization signal motif is present at residues 514-521 (DRKNLDRA). Over residues 809 to 822 (SSDQTALWTQSQWA) the composition is skewed to polar residues.

Belongs to the TEC1 family.

Its subcellular location is the nucleus. AbaA and wetA are pivotal regulators of conidiophore development and conidium maturation. They act individually and together to regulate their own expression and that of numerous other sporulation-specific genes. Binds to the sequence 5'-CATTCY-3', where Y is a pyrimidine, making both major- and minor-groove contacts. Plays a pivotal role in conidiation by regulating cell cycle pathways and other conidiation-related genes. The protein is Conidiophore development regulator abaA of Gibberella zeae (strain ATCC MYA-4620 / CBS 123657 / FGSC 9075 / NRRL 31084 / PH-1) (Wheat head blight fungus).